The primary structure comprises 530 residues: Histone-arginine methyltransferase CARMER (530 aa).

Residues 141-450 (ASQYFQFYGY…QSYDVTIDLH (310 aa)) form the SAM-dependent MTase PRMT-type domain. 6 residues coordinate S-adenosyl-L-methionine: Q154, R163, G187, E209, E238, and T266. Asymmetric dimethylarginine; by autocatalysis is present on R501.

It belongs to the class I-like SAM-binding methyltransferase superfamily. Protein arginine N-methyltransferase family. As to quaternary structure, homodimer. The dimethylated protein is the major form.

The protein resides in the cytoplasm. It localises to the nucleus. It carries out the reaction L-arginyl-[protein] + 2 S-adenosyl-L-methionine = N(omega),N(omega)-dimethyl-L-arginyl-[protein] + 2 S-adenosyl-L-homocysteine + 2 H(+). Its function is as follows. Methylates (mono- and asymmetric dimethylation) the guanidino nitrogens of arginyl residues in proteins. May methylate histone H3 at 'Arg-17' and activate transcription via chromatin remodeling. In Drosophila sechellia (Fruit fly), this protein is Histone-arginine methyltransferase CARMER (Art4).